Consider the following 273-residue polypeptide: SPRY domain-containing SOCS box protein 1 (273 aa).

A Phosphotyrosine modification is found at Tyr31. The B30.2/SPRY domain maps to 33–231; the sequence is KPTRLDLLLD…IRMRYLNGLD (199 aa). In terms of domain architecture, SOCS box spans 232–273; that stretch reads PEPLPLMDLCRRSVRLALGKGRLGEIHALPLPASLKAYLLYQ.

It belongs to the SPSB family. As to quaternary structure, component of the probable ECS(SPSB1) E3 ubiquitin-protein ligase complex which contains CUL5, RNF7/RBX2, Elongin BC complex and SPSB1. Interacts with CUL5, RNF7, ELOB and ELOC. Directly interacts with MET tyrosine kinase domain in the presence and in the absence of HGF, however HGF treatment has a positive effect on this interaction. When phosphorylated, interacts with RASA1 without affecting its stability. Interacts (via B30.2/SPRY domain) with PAWR; this interaction is direct and occurs in association with the Elongin BC complex. Interacts with NOS2 and EPHB2.

It is found in the cytoplasm. Its subcellular location is the cytosol. Its pathway is protein modification; protein ubiquitination. Its function is as follows. Substrate recognition component of a SCF-like ECS (Elongin BC-CUL2/5-SOCS-box protein) E3 ubiquitin-protein ligase complex which mediates the ubiquitination and subsequent proteasomal degradation of target proteins. Negatively regulates nitric oxide (NO) production and limits cellular toxicity in activated macrophages by mediating the ubiquitination and proteasomal degradation of NOS2. Acts as a bridge which links NOS2 with the ECS E3 ubiquitin ligase complex components ELOC and CUL5. In Bos taurus (Bovine), this protein is SPRY domain-containing SOCS box protein 1 (SPSB1).